The following is an 84-amino-acid chain: Delta-conotoxin-like MVIA (84 aa).

The signal sequence occupies residues 1-22; sequence MKLTCVMIVAVLFLTTWTFVTA. A propeptide spanning residues 23–49 is cleaved from the precursor; sequence DDSRYGLKNLFPKARHEMKNPEASKLN. Disulfide bonds link C54–C69, C61–C73, and C68–C77. P65 carries the 4-hydroxyproline modification. S83 carries the serine amide modification.

Belongs to the conotoxin O1 superfamily. As to expression, expressed by the venom duct.

The protein localises to the secreted. Delta-conotoxins bind to site 6 of voltage-gated sodium channels (Nav) and inhibit the inactivation process. This chain is Delta-conotoxin-like MVIA, found in Conus magus (Magical cone).